Here is a 374-residue protein sequence, read N- to C-terminus: Mitochondrial inner membrane protein oxa1-1 (374 aa).

A helical transmembrane segment spans residues 77–97; the sequence is TINVYAGAPWWVSIILTTLGV. Over 98 to 159 the chain is Mitochondrial intermembrane; the sequence is RLALTPVMIA…GIYLKHNVNP (62 aa). A helical membrane pass occupies residues 160–180; the sequence is FAIFILPLTQSAVFFSFFYAI. Residues 181–242 lie on the Mitochondrial matrix side of the membrane; it reads RKMSRLSVDG…TIGNSTNWRT (62 aa). The helical transmembrane segment at 243 to 263 threads the bilayer; the sequence is FFFLCCLLSPLLTAKLPAAIF. Residues 264–374 lie on the Mitochondrial intermembrane side of the membrane; the sequence is MYWIPSSLFN…SKKNSKKQSN (111 aa).

Belongs to the OXA1/ALB3/YidC family.

The protein localises to the mitochondrion inner membrane. Its function is as follows. Required for the insertion of integral membrane proteins into the mitochondrial inner membrane. Essential for the activity and assembly of cytochrome c oxidase. Not essential for viability, while oxa102 is essential. When both genes are deleted the cell is non-viable, suggesting that oxa101 act as a back-up for oxa102. The polypeptide is Mitochondrial inner membrane protein oxa1-1 (oxa101) (Schizosaccharomyces pombe (strain 972 / ATCC 24843) (Fission yeast)).